The primary structure comprises 91 residues: Probable Fe(2+)-trafficking protein (91 aa).

The protein belongs to the Fe(2+)-trafficking protein family. As to quaternary structure, monomer.

Its function is as follows. Could be a mediator in iron transactions between iron acquisition and iron-requiring processes, such as synthesis and/or repair of Fe-S clusters in biosynthetic enzymes. In Citrobacter koseri (strain ATCC BAA-895 / CDC 4225-83 / SGSC4696), this protein is Probable Fe(2+)-trafficking protein.